The primary structure comprises 688 residues: Probable xyloglucan glycosyltransferase 7 (688 aa).

Residues Met-1–Lys-25 are disordered. Gly residues predominate over residues Arg-8–Thr-20. 2 consecutive transmembrane segments (helical) span residues Val-121–Trp-141 and Val-183–Ile-203. Residue Asp-269 is part of the active site. 2 residues coordinate substrate: Asp-328 and Asp-330. The active site involves Asp-422. A run of 2 helical transmembrane segments spans residues Leu-500–Val-520 and Leu-525–Ala-545. Residues His-604–His-635 form a disordered region. Positions Leu-619–Lys-628 are enriched in basic and acidic residues. Helical transmembrane passes span Ile-638–Leu-657 and Ile-663–Ile-683.

This sequence belongs to the glycosyltransferase 2 family. Plant cellulose synthase-like C subfamily.

The protein resides in the golgi apparatus membrane. In terms of biological role, probable beta-1,4-glucan synthase rather involved in the synthesis of the xyloglucan backbone than cellulose. Seems to work simultaneously with xyloglucan 6-xylosyltransferase. Xyloglucan is a noncellulosic polysaccharides of plant cell wall and consists of a glucan backbone substituted by xylose, galactose and fucose. The protein is Probable xyloglucan glycosyltransferase 7 (CSLC7) of Oryza sativa subsp. japonica (Rice).